Reading from the N-terminus, the 568-residue chain is Proline--tRNA ligase (568 aa).

Belongs to the class-II aminoacyl-tRNA synthetase family. ProS type 1 subfamily. As to quaternary structure, homodimer.

The protein resides in the cytoplasm. The catalysed reaction is tRNA(Pro) + L-proline + ATP = L-prolyl-tRNA(Pro) + AMP + diphosphate. In terms of biological role, catalyzes the attachment of proline to tRNA(Pro) in a two-step reaction: proline is first activated by ATP to form Pro-AMP and then transferred to the acceptor end of tRNA(Pro). As ProRS can inadvertently accommodate and process non-cognate amino acids such as alanine and cysteine, to avoid such errors it has two additional distinct editing activities against alanine. One activity is designated as 'pretransfer' editing and involves the tRNA(Pro)-independent hydrolysis of activated Ala-AMP. The other activity is designated 'posttransfer' editing and involves deacylation of mischarged Ala-tRNA(Pro). The misacylated Cys-tRNA(Pro) is not edited by ProRS. This Halothermothrix orenii (strain H 168 / OCM 544 / DSM 9562) protein is Proline--tRNA ligase.